The sequence spans 282 residues: Acetyl-coenzyme A carboxylase carboxyl transferase subunit beta (282 aa).

Positions 29–282 (LWRTCPKCQR…LMKYGGKQND (254 aa)) constitute a CoA carboxyltransferase N-terminal domain. C33, C36, C51, and C54 together coordinate Zn(2+). A C4-type zinc finger spans residues 33-54 (CPKCQRTLFAAQMDEYATCPGC).

It belongs to the AccD/PCCB family. Acetyl-CoA carboxylase is a heterohexamer composed of biotin carboxyl carrier protein (AccB), biotin carboxylase (AccC) and two subunits each of ACCase subunit alpha (AccA) and ACCase subunit beta (AccD). It depends on Zn(2+) as a cofactor.

The protein resides in the cytoplasm. It carries out the reaction N(6)-carboxybiotinyl-L-lysyl-[protein] + acetyl-CoA = N(6)-biotinyl-L-lysyl-[protein] + malonyl-CoA. It participates in lipid metabolism; malonyl-CoA biosynthesis; malonyl-CoA from acetyl-CoA: step 1/1. Its function is as follows. Component of the acetyl coenzyme A carboxylase (ACC) complex. Biotin carboxylase (BC) catalyzes the carboxylation of biotin on its carrier protein (BCCP) and then the CO(2) group is transferred by the transcarboxylase to acetyl-CoA to form malonyl-CoA. This is Acetyl-coenzyme A carboxylase carboxyl transferase subunit beta from Limosilactobacillus fermentum (strain NBRC 3956 / LMG 18251) (Lactobacillus fermentum).